The following is a 293-amino-acid chain: Fructose-bisphosphate aldolase class 1 (293 aa).

The active-site Proton acceptor is Glu176. Lys211 acts as the Schiff-base intermediate with dihydroxyacetone-P in catalysis.

The protein belongs to the class I fructose-bisphosphate aldolase family.

The catalysed reaction is beta-D-fructose 1,6-bisphosphate = D-glyceraldehyde 3-phosphate + dihydroxyacetone phosphate. It functions in the pathway carbohydrate degradation; glycolysis; D-glyceraldehyde 3-phosphate and glycerone phosphate from D-glucose: step 4/4. This chain is Fructose-bisphosphate aldolase class 1, found in Porphyromonas gingivalis (strain ATCC 33277 / DSM 20709 / CIP 103683 / JCM 12257 / NCTC 11834 / 2561).